Consider the following 346-residue polypeptide: Peripherin-2 (346 aa).

The Cytoplasmic portion of the chain corresponds to 1–18 (MALLKVKFDQKKRVKLAQ). Residues 19–41 (GLWLMNWFSVLAGIIIFGLGLFL) form a helical membrane-spanning segment. The Lumenal portion of the chain corresponds to 42 to 62 (KIELRKRSDVMNNSESHFVPN). Residue asparagine 53 is glycosylated (N-linked (GlcNAc...) asparagine). The helical transmembrane segment at 63–79 (SLIGVGVLSCVFNSLAG) threads the bilayer. Over 80–101 (KICYDALDPAKYAKWKPWLKPY) the chain is Cytoplasmic. A helical membrane pass occupies residues 102–122 (LAVCVLFNVVLFLVALCCFLL). The Lumenal segment spans residues 123 to 264 (RGSLESTLAH…LSYYSNLMNT (142 aa)). Asparagine 229 and asparagine 263 each carry an N-linked (GlcNAc...) asparagine glycan. The helical transmembrane segment at 265–283 (TGAVTLLVWLFEVTITVGL) threads the bilayer. Residues 284–346 (RYLHTALEGM…EDAGQAPAAG (63 aa)) are Cytoplasmic-facing. Residues 341 to 346 (QAPAAG) form an interaction with MREG region.

It belongs to the PRPH2/ROM1 family. As to quaternary structure, homodimer; disulfide-linked. Forms a homotetramer. Forms a heterotetramer with ROM1. Homotetramer and heterotetramer core complexes go on to form higher order complexes by formation of intermolecular disulfide bonds. Interacts with MREG. Interacts with STX3. Interacts with SNAP25. In terms of tissue distribution, retina (photoreceptor). In rim region of ROS (rod outer segment) disks.

Its subcellular location is the membrane. The protein resides in the cell projection. The protein localises to the cilium. It localises to the photoreceptor outer segment. It is found in the photoreceptor inner segment. Functionally, essential for retina photoreceptor outer segment disk morphogenesis, may also play a role with ROM1 in the maintenance of outer segment disk structure. Required for the maintenance of retinal outer nuclear layer thickness. Required for the correct development and organization of the photoreceptor inner segment. This Bos taurus (Bovine) protein is Peripherin-2 (PRPH2).